The following is a 530-amino-acid chain: Autoinducer-2 kinase (530 aa).

It belongs to the FGGY kinase family.

The protein resides in the cytoplasm. It carries out the reaction (S)-4,5-dihydroxypentane-2,3-dione + ATP = (2S)-2-hydroxy-3,4-dioxopentyl phosphate + ADP + H(+). Its function is as follows. Catalyzes the phosphorylation of autoinducer-2 (AI-2) to phospho-AI-2, which subsequently inactivates the transcriptional regulator LsrR and leads to the transcription of the lsr operon. Phosphorylates the ring-open form of (S)-4,5-dihydroxypentane-2,3-dione (DPD), which is the precursor to all AI-2 signaling molecules, at the C5 position. This chain is Autoinducer-2 kinase, found in Yersinia pestis bv. Antiqua (strain Antiqua).